Here is a 407-residue protein sequence, read N- to C-terminus: CCA-adding enzyme (407 aa).

ATP contacts are provided by G32 and R35. The CTP site is built by G32 and R35. Positions 45 and 47 each coordinate Mg(2+). Residues R116, D159, R162, R165, and R168 each coordinate ATP. Residues R116, D159, R162, R165, and R168 each coordinate CTP.

This sequence belongs to the tRNA nucleotidyltransferase/poly(A) polymerase family. Bacterial CCA-adding enzyme type 3 subfamily. Homodimer. It depends on Mg(2+) as a cofactor.

It catalyses the reaction a tRNA precursor + 2 CTP + ATP = a tRNA with a 3' CCA end + 3 diphosphate. The catalysed reaction is a tRNA with a 3' CCA end + 2 CTP + ATP = a tRNA with a 3' CCACCA end + 3 diphosphate. In terms of biological role, catalyzes the addition and repair of the essential 3'-terminal CCA sequence in tRNAs without using a nucleic acid template. Adds these three nucleotides in the order of C, C, and A to the tRNA nucleotide-73, using CTP and ATP as substrates and producing inorganic pyrophosphate. tRNA 3'-terminal CCA addition is required both for tRNA processing and repair. Also involved in tRNA surveillance by mediating tandem CCA addition to generate a CCACCA at the 3' terminus of unstable tRNAs. While stable tRNAs receive only 3'-terminal CCA, unstable tRNAs are marked with CCACCA and rapidly degraded. The sequence is that of CCA-adding enzyme from Lactiplantibacillus plantarum (strain ATCC BAA-793 / NCIMB 8826 / WCFS1) (Lactobacillus plantarum).